Consider the following 500-residue polypeptide: MDALLVEKVLLGLFVAAVLALVVAKLTGKRLRLPPGPAGAPIVGNWLQVGDDLNHRNLMALARRFGDILLLRMGVRNLVVVSSPDLAKEVLHTQGVEFGSRTRNVVFDIFTGKGQDMVFTVYGDHWRKMRRIMTVPFFTNKVVAQNRAGWEEEARLVVEDVRRDPAAATSGVVIRRRLQLMMYNDMFRIMFDRRFDSVDDPLFNKLKAFNAERSRLSQSFEYNYGDFIPVLRPFLRRYLARCHQLKSQRMKLFEDHFVQERKRVMEQTGEIRCAMDHILEAERKGEINHDNVLYIVENINVAAIETTLWSIEWGIAELVNHPSIQSKVREEMASVLGGAAVTEPDLERLPYLQAVVKETLRLRMAIPLLVPHMNLADGKLAGYDIPAESKILVNAWFLANDPKRWVRPDEFRPERFLEEEKAVEAHGNDFRFVPFGVGRRSCPGIILALPIIGITLGRLVQSFDLLPPPGMDKVDTTEKPGQFSNQILKHATVVCKPIDA.

A helical membrane pass occupies residues 3–23; it reads ALLVEKVLLGLFVAAVLALVV. (E)-cinnamate is bound by residues 213–218 and Ala302; that span reads RSRLSQ. Cys442 is a heme binding site.

It belongs to the cytochrome P450 family. Heme serves as cofactor. In terms of tissue distribution, expressed in roots and leaves.

The protein resides in the membrane. The enzyme catalyses (E)-cinnamate + reduced [NADPH--hemoprotein reductase] + O2 = (E)-4-coumarate + oxidized [NADPH--hemoprotein reductase] + H2O + H(+). Its pathway is phenylpropanoid metabolism; trans-4-coumarate biosynthesis; trans-4-coumarate from trans-cinnamate: step 1/1. Catalyzes the first oxidative step of the phenylpropanoid pathway in higher plants by transforming trans-cinnamate into p-coumarate. The compounds formed by this pathway are essential components for lignification, pollination, and defense against ultraviolet light, predators and pathogens. In Oryza sativa subsp. japonica (Rice), this protein is Trans-cinnamate 4-monooxygenase.